The sequence spans 416 residues: Gamma-glutamyl phosphate reductase (416 aa).

The protein belongs to the gamma-glutamyl phosphate reductase family.

The protein localises to the cytoplasm. It catalyses the reaction L-glutamate 5-semialdehyde + phosphate + NADP(+) = L-glutamyl 5-phosphate + NADPH + H(+). The protein operates within amino-acid biosynthesis; L-proline biosynthesis; L-glutamate 5-semialdehyde from L-glutamate: step 2/2. Catalyzes the NADPH-dependent reduction of L-glutamate 5-phosphate into L-glutamate 5-semialdehyde and phosphate. The product spontaneously undergoes cyclization to form 1-pyrroline-5-carboxylate. This is Gamma-glutamyl phosphate reductase from Streptococcus thermophilus (strain CNRZ 1066).